Reading from the N-terminus, the 396-residue chain is Acetate kinase (396 aa).

Position 7 (Asn-7) interacts with Mg(2+). Position 14 (Lys-14) interacts with ATP. Residue Arg-86 coordinates substrate. Asp-143 acts as the Proton donor/acceptor in catalysis. Residues 203–207 (HLGNG), 277–279 (DMR), and 325–329 (GIGEH) each bind ATP. Glu-380 provides a ligand contact to Mg(2+).

Belongs to the acetokinase family. As to quaternary structure, homodimer. Mg(2+) is required as a cofactor. It depends on Mn(2+) as a cofactor.

Its subcellular location is the cytoplasm. It catalyses the reaction acetate + ATP = acetyl phosphate + ADP. It participates in metabolic intermediate biosynthesis; acetyl-CoA biosynthesis; acetyl-CoA from acetate: step 1/2. Its function is as follows. Catalyzes the formation of acetyl phosphate from acetate and ATP. Can also catalyze the reverse reaction. This is Acetate kinase from Sulfurovum sp. (strain NBC37-1).